Reading from the N-terminus, the 319-residue chain is Acetyl-coenzyme A carboxylase carboxyl transferase subunit alpha (319 aa).

Residues 39-293 (KLEKKVDRMR…HEAIARQLKE (255 aa)) enclose the CoA carboxyltransferase C-terminal domain.

The protein belongs to the AccA family. As to quaternary structure, acetyl-CoA carboxylase is a heterohexamer composed of biotin carboxyl carrier protein (AccB), biotin carboxylase (AccC) and two subunits each of ACCase subunit alpha (AccA) and ACCase subunit beta (AccD).

It localises to the cytoplasm. It carries out the reaction N(6)-carboxybiotinyl-L-lysyl-[protein] + acetyl-CoA = N(6)-biotinyl-L-lysyl-[protein] + malonyl-CoA. It functions in the pathway lipid metabolism; malonyl-CoA biosynthesis; malonyl-CoA from acetyl-CoA: step 1/1. In terms of biological role, component of the acetyl coenzyme A carboxylase (ACC) complex. First, biotin carboxylase catalyzes the carboxylation of biotin on its carrier protein (BCCP) and then the CO(2) group is transferred by the carboxyltransferase to acetyl-CoA to form malonyl-CoA. In Geobacter sulfurreducens (strain ATCC 51573 / DSM 12127 / PCA), this protein is Acetyl-coenzyme A carboxylase carboxyl transferase subunit alpha.